The following is a 674-amino-acid chain: Membrane-anchored lipid-binding protein LAM5 (674 aa).

Disordered regions lie at residues 1 to 52 and 65 to 151; these read MSDV…LNTE and NQSA…GSPL. The Cytoplasmic segment spans residues 1–633; the sequence is MSDVDNWEPV…AEQQGLKVTM (633 aa). Residues 69 to 81 are compositionally biased toward basic and acidic residues; sequence ADEHPTEIKHDQS. The span at 82 to 119 shows a compositional bias: low complexity; sequence RTSSTSSFFSGMISSFKSNVPSPVSRSTTPTSPVSQPS. A Phosphothreonine modification is found at Thr-110. Phosphoserine is present on residues Ser-113 and Ser-140. Phosphothreonine is present on Thr-143. Residue Ser-149 is modified to Phosphoserine. Residues 198-264 enclose the GRAM domain; that stretch reads KDFHETFKSV…FEDVTFMEKT (67 aa). The segment covering 336 to 357 has biased composition (acidic residues); that stretch reads IDEENNDKDANDNDTNENDDEN. Residues 336-380 are disordered; that stretch reads IDEENNDKDANDNDTNENDDENISTNETTPNSTSSSPDKEKEKAY. Positions 358–371 are enriched in low complexity; sequence ISTNETTPNSTSSS. A VASt domain is found at 409-582; it reads NEFVLKELPF…ILSKFIKNNV (174 aa). A helical transmembrane segment spans residues 634 to 654; the sequence is ETWLFLYLIVVVLLLFNLFYI. The Lumenal segment spans residues 655–674; it reads RSIAVSLHQLVKLQLVELKL.

It belongs to the YSP2 family.

It localises to the endoplasmic reticulum membrane. Its function is as follows. May be involved in sterol transfer between intracellular membranes. This Saccharomyces cerevisiae (strain ATCC 204508 / S288c) (Baker's yeast) protein is Membrane-anchored lipid-binding protein LAM5.